Reading from the N-terminus, the 474-residue chain is Glutamate--tRNA ligase (474 aa).

A 'HIGH' region motif is present at residues Pro9 to Gly19. The short motif at Lys240–Arg244 is the 'KMSKS' region element. An ATP-binding site is contributed by Lys243.

It belongs to the class-I aminoacyl-tRNA synthetase family. Glutamate--tRNA ligase type 1 subfamily. As to quaternary structure, monomer.

The protein localises to the cytoplasm. It carries out the reaction tRNA(Glu) + L-glutamate + ATP = L-glutamyl-tRNA(Glu) + AMP + diphosphate. Its function is as follows. Catalyzes the attachment of glutamate to tRNA(Glu) in a two-step reaction: glutamate is first activated by ATP to form Glu-AMP and then transferred to the acceptor end of tRNA(Glu). In Photobacterium profundum (strain SS9), this protein is Glutamate--tRNA ligase.